Here is a 193-residue protein sequence, read N- to C-terminus: p53 apoptosis effector related to PMP-22 (193 aa).

Transmembrane regions (helical) follow at residues 12-32, 79-99, 110-130, and 151-171; these read RWIL…ALAG, AMLF…FFAL, VIGG…VIYP, and WAYG…FFFC.

The protein belongs to the TMEM47 family. In terms of assembly, (Microbial infection) Interacts with S.typhimurium sipA and sctB1/sipC. In terms of tissue distribution, expressed in skin, heart, placental, liver, pancreas, keratinocytes and dermal fibroblasts. May translocate to the intestinal apical epithelial cell surface via sipA and sctB1/sipC-promoted exocytic translocation following infection by S. Typhimurium.

The protein localises to the cell junction. It is found in the desmosome. Its subcellular location is the cell membrane. It localises to the cytoplasm. Functionally, component of intercellular desmosome junctions. Plays a role in stratified epithelial integrity and cell-cell adhesion by promoting desmosome assembly. Thereby plays a role in barrier function of the skin against infection. Plays a role in mammary epithelial tissue homeostasis and remodeling during and after pregnancy, potentially via its involvement in desmosome cell-cell junctions. Required for tooth enamel development via facilitating desmosome-mediated ameloblast adhesion to the stratum intermedium during the transitional stage of amelogenesis. May also play a role in downstream transcriptional regulation of other genes involved in amelogenesis such as AMBN, ENAM, MMP20 and KLK4. Plays a role as an effector in the TP53-dependent apoptotic pathway. Positively regulates apoptosis in T-helper 17 (Th17) cell populations via caspase-dependent signaling. Promotes neutrophil transepithelial migration in response to chemoattractants such as hepoxilin A3 (HXA3), N-Formylmethionyl-leucyl-phenylalanine (fMLP) and CXCL8/IL-8. Required for neutrophil transepithelial migration in response to S.typhimurium infection. May act as a positive regulator of endothelial cell apoptosis in response to blood flow-derived shear stress. This chain is p53 apoptosis effector related to PMP-22, found in Homo sapiens (Human).